Reading from the N-terminus, the 209-residue chain is Uracil phosphoribosyltransferase (209 aa).

5-phospho-alpha-D-ribose 1-diphosphate is bound by residues arginine 79, arginine 104, and 131 to 139; that span reads DPMLATGGS. Uracil-binding positions include isoleucine 194 and 199–201; that span reads GDA. 5-phospho-alpha-D-ribose 1-diphosphate is bound at residue aspartate 200.

This sequence belongs to the UPRTase family. Mg(2+) is required as a cofactor.

The enzyme catalyses UMP + diphosphate = 5-phospho-alpha-D-ribose 1-diphosphate + uracil. It functions in the pathway pyrimidine metabolism; UMP biosynthesis via salvage pathway; UMP from uracil: step 1/1. With respect to regulation, allosterically activated by GTP. Catalyzes the conversion of uracil and 5-phospho-alpha-D-ribose 1-diphosphate (PRPP) to UMP and diphosphate. This Citrifermentans bemidjiense (strain ATCC BAA-1014 / DSM 16622 / JCM 12645 / Bem) (Geobacter bemidjiensis) protein is Uracil phosphoribosyltransferase.